Here is a 495-residue protein sequence, read N- to C-terminus: Sulfhydryl oxidase 2 (495 aa).

Positions 1–15 (MSLVHLLLFAGLVIA) are cleaved as a signal peptide. Residues 29–164 (EISDQKDKAV…LLNWINKQIG (136 aa)) enclose the Thioredoxin domain. Asparagine 41 carries an N-linked (GlcNAc...) asparagine glycan. Active-site nucleophile residues include cysteine 66 and cysteine 69. The cysteines at positions 66 and 69 are disulfide-linked. N-linked (GlcNAc...) asparagine glycans are attached at residues asparagine 182, asparagine 257, asparagine 266, and asparagine 292. Cysteine 287 and cysteine 299 are joined by a disulfide. Positions 290 to 392 (SKNDTRGFSC…GDPKFPKIIW (103 aa)) constitute an ERV/ALR sulfhydryl oxidase domain. Residues arginine 295, tryptophan 302, histidine 306, glutamate 336, histidine 340, 363–370 (WSTHNKVN), lysine 389, and tryptophan 392 each bind FAD. Cysteine 334 and cysteine 337 form a disulfide bridge. Cysteine 398 and cysteine 401 are joined by a disulfide.

FAD serves as cofactor.

It is found in the secreted. It catalyses the reaction 2 R'C(R)SH + O2 = R'C(R)S-S(R)CR' + H2O2. Functionally, catalyzes the oxidation of sulfhydryl groups in peptide and protein thiols to disulfides with the reduction of oxygen to hydrogen peroxide. May contribute to disulfide bond formation in a variety of secreted proteins. The sequence is that of Sulfhydryl oxidase 2 (QSOX2) from Arabidopsis thaliana (Mouse-ear cress).